A 380-amino-acid polypeptide reads, in one-letter code: MAPNPRKSHPILKMVNNSLIDLPTPPNISAWWNFGSLLGICLVTQILTGLLLATHYTADTSLAFSSVAHTCRNVQYGWLIRNLHANGASLFFICIYLHIGRGLYYGSYLYKETWNTGVILLLSLMATAFVGYVLPWGQMSFWGATVITNLFSAFPYIGQTLVEWAWGGFSVDNPTLTRFFALHFLLPFLIAGLTLTHLTFLHETGSNNPLGLISNCDKIPFHPYFSPKDLLGFILMFLPLTALALFSPNLLGDPENFTPANPLVTPPHIKPEWYFLFAYAILRSIPNKLGGVLALAASVLILFLAPFLHKSKQRTMTFRPLSQLLFWILVTNLLILTWVGSQPVEQPFIIIGQLASLAYFIILLILFPIIGALENKMLNF.

Transmembrane regions (helical) follow at residues 34-54, 78-99, 114-134, and 179-199; these read FGSL…LLAT, WLIR…YLHI, WNTG…GYVL, and FFAL…THLT. Residues His-84 and His-98 each contribute to the heme b site. Positions 183 and 197 each coordinate heme b. His-202 is an a ubiquinone binding site. Helical transmembrane passes span 227-247, 289-309, 321-341, and 348-368; these read PKDL…ALFS, LGGV…PFLH, LSQL…WVGS, and FIII…ILFP.

Belongs to the cytochrome b family. The cytochrome bc1 complex contains 11 subunits: 3 respiratory subunits (MT-CYB, CYC1 and UQCRFS1), 2 core proteins (UQCRC1 and UQCRC2) and 6 low-molecular weight proteins (UQCRH/QCR6, UQCRB/QCR7, UQCRQ/QCR8, UQCR10/QCR9, UQCR11/QCR10 and a cleavage product of UQCRFS1). This cytochrome bc1 complex then forms a dimer. Heme b serves as cofactor.

It localises to the mitochondrion inner membrane. Component of the ubiquinol-cytochrome c reductase complex (complex III or cytochrome b-c1 complex) that is part of the mitochondrial respiratory chain. The b-c1 complex mediates electron transfer from ubiquinol to cytochrome c. Contributes to the generation of a proton gradient across the mitochondrial membrane that is then used for ATP synthesis. This is Cytochrome b (MT-CYB) from Todus todus (Jamaican tody).